Consider the following 125-residue polypeptide: Phosphoribosyl-AMP cyclohydrolase (125 aa).

Asp74 is a Mg(2+) binding site. Cys75 is a Zn(2+) binding site. Mg(2+)-binding residues include Asp76 and Asp78. Zn(2+) contacts are provided by Cys92 and Cys99.

The protein belongs to the PRA-CH family. As to quaternary structure, homodimer. It depends on Mg(2+) as a cofactor. Zn(2+) serves as cofactor.

Its subcellular location is the cytoplasm. The enzyme catalyses 1-(5-phospho-beta-D-ribosyl)-5'-AMP + H2O = 1-(5-phospho-beta-D-ribosyl)-5-[(5-phospho-beta-D-ribosylamino)methylideneamino]imidazole-4-carboxamide. Its pathway is amino-acid biosynthesis; L-histidine biosynthesis; L-histidine from 5-phospho-alpha-D-ribose 1-diphosphate: step 3/9. Its function is as follows. Catalyzes the hydrolysis of the adenine ring of phosphoribosyl-AMP. In Citrifermentans bemidjiense (strain ATCC BAA-1014 / DSM 16622 / JCM 12645 / Bem) (Geobacter bemidjiensis), this protein is Phosphoribosyl-AMP cyclohydrolase.